The chain runs to 367 residues: Peptide chain release factor 1 (367 aa).

N5-methylglutamine is present on Q238.

It belongs to the prokaryotic/mitochondrial release factor family. Post-translationally, methylated by PrmC. Methylation increases the termination efficiency of RF1.

Its subcellular location is the cytoplasm. Peptide chain release factor 1 directs the termination of translation in response to the peptide chain termination codons UAG and UAA. The polypeptide is Peptide chain release factor 1 (Dictyoglomus turgidum (strain DSM 6724 / Z-1310)).